Here is a 311-residue protein sequence, read N- to C-terminus: Ribosomal RNA small subunit methyltransferase H (311 aa).

S-adenosyl-L-methionine contacts are provided by residues 32–34, Asp52, Phe79, Asp100, and Gln107; that span reads AGH.

The protein belongs to the methyltransferase superfamily. RsmH family.

It localises to the cytoplasm. The catalysed reaction is cytidine(1402) in 16S rRNA + S-adenosyl-L-methionine = N(4)-methylcytidine(1402) in 16S rRNA + S-adenosyl-L-homocysteine + H(+). Functionally, specifically methylates the N4 position of cytidine in position 1402 (C1402) of 16S rRNA. This chain is Ribosomal RNA small subunit methyltransferase H, found in Staphylococcus carnosus (strain TM300).